The following is a 285-amino-acid chain: Bifunctional protein FolD (285 aa).

NADP(+) contacts are provided by residues 165-167 (GAS) and Ser190.

Belongs to the tetrahydrofolate dehydrogenase/cyclohydrolase family. In terms of assembly, homodimer.

It catalyses the reaction (6R)-5,10-methylene-5,6,7,8-tetrahydrofolate + NADP(+) = (6R)-5,10-methenyltetrahydrofolate + NADPH. It carries out the reaction (6R)-5,10-methenyltetrahydrofolate + H2O = (6R)-10-formyltetrahydrofolate + H(+). The protein operates within one-carbon metabolism; tetrahydrofolate interconversion. Catalyzes the oxidation of 5,10-methylenetetrahydrofolate to 5,10-methenyltetrahydrofolate and then the hydrolysis of 5,10-methenyltetrahydrofolate to 10-formyltetrahydrofolate. This is Bifunctional protein FolD from Cupriavidus metallidurans (strain ATCC 43123 / DSM 2839 / NBRC 102507 / CH34) (Ralstonia metallidurans).